The chain runs to 451 residues: Chromosomal replication initiator protein DnaA (451 aa).

Residues 1–77 form a domain I, interacts with DnaA modulators region; sequence MTENEQIFWN…EVYNAQISVD (77 aa). The segment at 77 to 110 is domain II; it reads DYVFEEDLMIEQNQTKINQKPKQQALNSLPTVTS. Positions 111 to 329 are domain III, AAA+ region; it reads DLNSKYSFEN…GALKDISLGA (219 aa). ATP is bound by residues Gly155, Gly157, Lys158, and Thr159. The tract at residues 330 to 451 is domain IV, binds dsDNA; the sequence is NFKQIDTITV…EIETIKNKIK (122 aa).

It belongs to the DnaA family. In terms of assembly, oligomerizes as a right-handed, spiral filament on DNA at oriC.

It localises to the cytoplasm. In terms of biological role, plays an essential role in the initiation and regulation of chromosomal replication. ATP-DnaA binds to the origin of replication (oriC) to initiate formation of the DNA replication initiation complex once per cell cycle. Binds the DnaA box (a 9 base pair repeat at the origin) and separates the double-stranded (ds)DNA. Forms a right-handed helical filament on oriC DNA; dsDNA binds to the exterior of the filament while single-stranded (ss)DNA is stabiized in the filament's interior. The ATP-DnaA-oriC complex binds and stabilizes one strand of the AT-rich DNA unwinding element (DUE), permitting loading of DNA polymerase. After initiation quickly degrades to an ADP-DnaA complex that is not apt for DNA replication. Binds acidic phospholipids. This Streptococcus pyogenes serotype M49 (strain NZ131) protein is Chromosomal replication initiator protein DnaA.